A 562-amino-acid polypeptide reads, in one-letter code: Arginine--tRNA ligase (562 aa).

A 'HIGH' region motif is present at residues 121 to 131 (PNIAKPMGMGH).

The protein belongs to the class-I aminoacyl-tRNA synthetase family. Monomer.

The protein localises to the cytoplasm. The catalysed reaction is tRNA(Arg) + L-arginine + ATP = L-arginyl-tRNA(Arg) + AMP + diphosphate. The polypeptide is Arginine--tRNA ligase (Limosilactobacillus reuteri (strain DSM 20016) (Lactobacillus reuteri)).